The following is a 148-amino-acid chain: Large ribosomal subunit protein bL9 (148 aa).

Belongs to the bacterial ribosomal protein bL9 family.

In terms of biological role, binds to the 23S rRNA. The polypeptide is Large ribosomal subunit protein bL9 (Salinispora arenicola (strain CNS-205)).